The primary structure comprises 175 residues: Inorganic pyrophosphatase (175 aa).

The substrate site is built by Lys30, Arg44, and Tyr56. Positions 66, 71, and 103 each coordinate Mg(2+). A substrate-binding site is contributed by Tyr142.

The protein belongs to the PPase family. Homohexamer. Requires Mg(2+) as cofactor.

The protein resides in the cytoplasm. It carries out the reaction diphosphate + H2O = 2 phosphate + H(+). Its function is as follows. Catalyzes the hydrolysis of inorganic pyrophosphate (PPi) forming two phosphate ions. The sequence is that of Inorganic pyrophosphatase from Ralstonia nicotianae (strain ATCC BAA-1114 / GMI1000) (Ralstonia solanacearum).